A 472-amino-acid chain; its full sequence is Phosphoglucosamine mutase (472 aa).

The Phosphoserine intermediate role is filled by serine 123. Positions 123, 262, 264, and 266 each coordinate Mg(2+). Serine 123 is subject to Phosphoserine.

The protein belongs to the phosphohexose mutase family. Mg(2+) is required as a cofactor. In terms of processing, activated by phosphorylation.

It carries out the reaction alpha-D-glucosamine 1-phosphate = D-glucosamine 6-phosphate. In terms of biological role, catalyzes the conversion of glucosamine-6-phosphate to glucosamine-1-phosphate. The protein is Phosphoglucosamine mutase of Synechococcus elongatus (strain ATCC 33912 / PCC 7942 / FACHB-805) (Anacystis nidulans R2).